The sequence spans 120 residues: Spermidine export protein MdtJ (120 aa).

Transmembrane regions (helical) follow at residues 1-21 (MFYW…TLSM), 31-51 (AGFI…SFAV), 54-74 (IALG…ITIF), and 81-101 (EALS…IVLI).

The protein belongs to the drug/metabolite transporter (DMT) superfamily. Small multidrug resistance (SMR) (TC 2.A.7.1) family. MdtJ subfamily. As to quaternary structure, forms a complex with MdtI.

The protein resides in the cell inner membrane. In terms of biological role, catalyzes the excretion of spermidine. The protein is Spermidine export protein MdtJ of Salmonella choleraesuis (strain SC-B67).